The following is a 131-amino-acid chain: Fumarate reductase subunit C (131 aa).

A run of 3 helical transmembrane segments spans residues 30–50 (EGTCLPQLWFSLVVLFGVFAL), 58–78 (AGFVGFLSNPIVMLINIVTLI), and 109–129 (IVRGLWGLTIVVTVVILAVAL).

It belongs to the FrdC family. Part of an enzyme complex containing four subunits: a flavoprotein (FrdA), an iron-sulfur protein (FrdB), and two hydrophobic anchor proteins (FrdC and FrdD).

Its subcellular location is the cell inner membrane. In terms of biological role, two distinct, membrane-bound, FAD-containing enzymes are responsible for the catalysis of fumarate and succinate interconversion; fumarate reductase is used in anaerobic growth, and succinate dehydrogenase is used in aerobic growth. Anchors the catalytic components of the fumarate reductase complex to the cell inner membrane, binds quinones. This chain is Fumarate reductase subunit C, found in Proteus mirabilis (strain HI4320).